Reading from the N-terminus, the 265-residue chain is Mlc titration factor A (265 aa).

Positions 111, 148, 152, and 211 each coordinate Zn(2+).

This sequence belongs to the MtfA family. Interacts with Mlc. It depends on Zn(2+) as a cofactor.

It is found in the cytoplasm. Its function is as follows. Involved in the modulation of the activity of the glucose-phosphotransferase system (glucose-PTS). Interacts with the transcriptional repressor Mlc, preventing its interaction with DNA and leading to the modulation of expression of genes regulated by Mlc, including ptsG, which encodes the PTS system glucose-specific EIICB component. Shows zinc-dependent metallopeptidase activity. In Shigella sonnei (strain Ss046), this protein is Mlc titration factor A.